The primary structure comprises 379 residues: Spermatogenesis-associated protein 17 (379 aa).

IQ domains lie at 48–77 (ENDA…VVTI), 71–100 (LNRV…AAYY), and 107–136 (YNEM…LKEY).

In terms of tissue distribution, strongly expressed in adult testis but weakly expressed in the spleen and thymus. Strongly expressed in round and elongating spermatids, and weakly or not expressed in spermatozoa.

It is found in the cytoplasm. This Mus musculus (Mouse) protein is Spermatogenesis-associated protein 17 (Spata17).